The primary structure comprises 374 residues: uncharacterized protein (374 aa).

Residues 1-23 form the signal peptide; the sequence is MDSKWFFIVLISFLLVLPSIVTP. The disordered stretch occupies residues 66 to 374; that stretch reads SSSSSSSSSS…SSSSSSSGEN (309 aa).

The protein resides in the secreted. This is an uncharacterized protein from Dictyostelium discoideum (Social amoeba).